The sequence spans 179 residues: ATP synthase subunit delta (179 aa).

Belongs to the ATPase delta chain family. As to quaternary structure, F-type ATPases have 2 components, F(1) - the catalytic core - and F(0) - the membrane proton channel. F(1) has five subunits: alpha(3), beta(3), gamma(1), delta(1), epsilon(1). F(0) has three main subunits: a(1), b(2) and c(10-14). The alpha and beta chains form an alternating ring which encloses part of the gamma chain. F(1) is attached to F(0) by a central stalk formed by the gamma and epsilon chains, while a peripheral stalk is formed by the delta and b chains.

Its subcellular location is the cell membrane. In terms of biological role, f(1)F(0) ATP synthase produces ATP from ADP in the presence of a proton or sodium gradient. F-type ATPases consist of two structural domains, F(1) containing the extramembraneous catalytic core and F(0) containing the membrane proton channel, linked together by a central stalk and a peripheral stalk. During catalysis, ATP synthesis in the catalytic domain of F(1) is coupled via a rotary mechanism of the central stalk subunits to proton translocation. Functionally, this protein is part of the stalk that links CF(0) to CF(1). It either transmits conformational changes from CF(0) to CF(1) or is implicated in proton conduction. In Ureaplasma urealyticum serovar 10 (strain ATCC 33699 / Western), this protein is ATP synthase subunit delta.